Reading from the N-terminus, the 190-residue chain is Frataxin homolog, mitochondrial (190 aa).

It belongs to the frataxin family. In terms of assembly, monomer (probable predominant form). Oligomer. Interacts with IscU. Component of the mitochondrial core iron-sulfur cluster (ISC) assembly complex at least composed of the cysteine desulfurase Nfs1, the scaffold protein IscU, the accessory protein bcn92/Isd11/Lyrm4, and probably fh/frataxin.

It localises to the mitochondrion. It carries out the reaction 4 Fe(2+) + O2 + 4 H(+) = 4 Fe(3+) + 2 H2O. Promotes the biosynthesis of heme as well as the assembly and repair of iron-sulfur clusters by delivering Fe(2+) to proteins involved in these pathways. May play a role in the protection against iron-catalyzed oxidative stress through its ability to catalyze the oxidation of Fe(2+) to Fe(3+). May be able to store large amounts of the metal in the form of a ferrihydrite mineral by oligomerization. Required for ecdysteroidogenesis in the prothoracic gland which is necessary for larval to pupal transition. The polypeptide is Frataxin homolog, mitochondrial (Drosophila melanogaster (Fruit fly)).